Here is a 640-residue protein sequence, read N- to C-terminus: Probable potassium transport system protein Kup (640 aa).

12 helical membrane passes run 26-46 (IAGLAVAAVGVVYGDIGTSPL), 69-89 (ILSLVFWALVLVVSAKYVLFI), 117-137 (AWVLSALGVFGAALFYGDGMI), 155-175 (PAFRPYVLPIALAVLCGLFVI), 186-206 (IFGPVMLVWFVLLAVLGIAGI), 224-244 (FFADMPLVGWLSLGAVVLAIT), 265-285 (WFLVVFPSLYLNYLGQGALIL), 297-317 (LLVPDALVYPMVAMATLATII), 355-375 (IYVPSINWMLLGAVVALVVGF), 384-404 (AYGIAVTLTMMIDTLLAFVVV), 415-435 (AGLFLGVFLAVDVAFFSATTV), and 437-457 (ILAGGWFPLLVGALIFTLLTT).

This sequence belongs to the HAK/KUP transporter (TC 2.A.72) family.

It localises to the cell inner membrane. It catalyses the reaction K(+)(in) + H(+)(in) = K(+)(out) + H(+)(out). Transport of potassium into the cell. Likely operates as a K(+):H(+) symporter. This is Probable potassium transport system protein Kup from Aromatoleum aromaticum (strain DSM 19018 / LMG 30748 / EbN1) (Azoarcus sp. (strain EbN1)).